Reading from the N-terminus, the 369-residue chain is Anhydro-N-acetylmuramic acid kinase (369 aa).

Position 12-19 (12-19 (GTSMDGVD)) interacts with ATP.

This sequence belongs to the anhydro-N-acetylmuramic acid kinase family.

It catalyses the reaction 1,6-anhydro-N-acetyl-beta-muramate + ATP + H2O = N-acetyl-D-muramate 6-phosphate + ADP + H(+). It functions in the pathway amino-sugar metabolism; 1,6-anhydro-N-acetylmuramate degradation. Its pathway is cell wall biogenesis; peptidoglycan recycling. Functionally, catalyzes the specific phosphorylation of 1,6-anhydro-N-acetylmuramic acid (anhMurNAc) with the simultaneous cleavage of the 1,6-anhydro ring, generating MurNAc-6-P. Is required for the utilization of anhMurNAc either imported from the medium or derived from its own cell wall murein, and thus plays a role in cell wall recycling. The protein is Anhydro-N-acetylmuramic acid kinase of Shewanella baltica (strain OS223).